Reading from the N-terminus, the 263-residue chain is Putative 2-aminoethylphosphonate transport system permease protein PhnV (263 aa).

The next 6 membrane-spanning stretches (helical) occupy residues 13–33, 69–89, 104–124, 131–151, 185–205, and 233–253; these read GVVA…VILM, LTIG…AALA, VFYL…LVAF, MNGT…AFTF, LPLL…LSMG, and NIAD…LLMM. One can recognise an ABC transmembrane type-1 domain in the interval 65–253; sequence LLASLTIGFC…LVAITLLLMM (189 aa).

Belongs to the binding-protein-dependent transport system permease family.

The protein resides in the cell inner membrane. Its function is as follows. Probably part of the PhnSTUV complex (TC 3.A.1.11.5) involved in 2-aminoethylphosphonate import. Probably responsible for the translocation of the substrate across the membrane. The polypeptide is Putative 2-aminoethylphosphonate transport system permease protein PhnV (phnV) (Salmonella typhi).